A 335-amino-acid polypeptide reads, in one-letter code: NADH-quinone oxidoreductase subunit H (335 aa).

A run of 8 helical transmembrane segments spans residues V11–L31, V81–I101, I114–G134, V154–F174, L187–V207, F238–F258, Q270–L290, and W307–Y327.

The protein belongs to the complex I subunit 1 family. NDH-1 is composed of 13 different subunits. Subunits NuoA, H, J, K, L, M, N constitute the membrane sector of the complex.

It localises to the cell inner membrane. It carries out the reaction a quinone + NADH + 5 H(+)(in) = a quinol + NAD(+) + 4 H(+)(out). In terms of biological role, NDH-1 shuttles electrons from NADH, via FMN and iron-sulfur (Fe-S) centers, to quinones in the respiratory chain. The immediate electron acceptor for the enzyme in this species is believed to be ubiquinone. Couples the redox reaction to proton translocation (for every two electrons transferred, four hydrogen ions are translocated across the cytoplasmic membrane), and thus conserves the redox energy in a proton gradient. This subunit may bind ubiquinone. This chain is NADH-quinone oxidoreductase subunit H, found in Pseudomonas putida (strain ATCC 700007 / DSM 6899 / JCM 31910 / BCRC 17059 / LMG 24140 / F1).